Reading from the N-terminus, the 86-residue chain is Large ribosomal subunit protein bL27 (86 aa).

Positions 1 to 22 (MAHKKAGGSSRNGRDSESKRLG) are disordered.

This sequence belongs to the bacterial ribosomal protein bL27 family.

This chain is Large ribosomal subunit protein bL27, found in Acidithiobacillus ferrooxidans (strain ATCC 23270 / DSM 14882 / CIP 104768 / NCIMB 8455) (Ferrobacillus ferrooxidans (strain ATCC 23270)).